Reading from the N-terminus, the 99-residue chain is MSSKVERERRKAQLLSQIQQQRLDLSASRREWLETTGAYDRRWNMLLSLRSWALVGSSVMAIWTIRHPNMLVRWARRGFGVWSAWRLVKTTLKQQQLRG.

This is an uncharacterized protein from Escherichia coli (strain K12).